The sequence spans 533 residues: E3 ubiquitin-protein ligase MGRN1 (533 aa).

Gly2 carries N-myristoyl glycine lipidation. The segment at 278 to 317 adopts an RING-type zinc-finger fold; sequence ECVVCLSDLRDTLILPCRHLCLCTSCADTLRYQANNCPIC. Residues 385–388 carry the Required for TSG101-binding motif; the sequence is PSAP. Phosphotyrosine is present on Tyr390. Residues 421-519 are disordered; sequence QKGKTQSKSP…QPVPPADIYL (99 aa). Residues 423–439 are compositionally biased toward polar residues; that stretch reads GKTQSKSPDSTLRSPSS. A phosphoserine mark is found at Ser429, Ser450, and Ser502. Residues 443-454 are compositionally biased toward acidic residues; sequence EEDEEKLSEDPE.

Interacts with MC1R and MC4R. Interacts with TSG101. Interacts with mislocalized cytosolically exposed PRNP; this interaction alters MGRN1 subcellular location and causes lysosomal enlargement. Post-translationally, autoubiquitinated in vitro.

It localises to the cytoplasm. The protein resides in the cytosol. Its subcellular location is the cell membrane. It is found in the early endosome. The enzyme catalyses S-ubiquitinyl-[E2 ubiquitin-conjugating enzyme]-L-cysteine + [acceptor protein]-L-lysine = [E2 ubiquitin-conjugating enzyme]-L-cysteine + N(6)-ubiquitinyl-[acceptor protein]-L-lysine.. It functions in the pathway protein modification; protein ubiquitination. E3 ubiquitin-protein ligase. Mediates TSG101 monoubiquitination at multiple sites. Plays a role in the regulation of endosome-to-lysosome trafficking. Impairs MC1R- and MC4R-signaling by competing with GNAS-binding to MCRs and inhibiting agonist-induced cAMP production. Does not inhibit ADRB2-signaling. Does not promote MC1R ubiquitination. Also acts as a negative regulator of hedgehog signaling. This chain is E3 ubiquitin-protein ligase MGRN1 (Mgrn1), found in Rattus norvegicus (Rat).